Reading from the N-terminus, the 497-residue chain is Guanosine-5'-triphosphate,3'-diphosphate pyrophosphatase (497 aa).

This sequence belongs to the GppA/Ppx family. GppA subfamily.

It catalyses the reaction guanosine 3'-diphosphate 5'-triphosphate + H2O = guanosine 3',5'-bis(diphosphate) + phosphate + H(+). The protein operates within purine metabolism; ppGpp biosynthesis; ppGpp from GTP: step 2/2. Catalyzes the conversion of pppGpp to ppGpp. Guanosine pentaphosphate (pppGpp) is a cytoplasmic signaling molecule which together with ppGpp controls the 'stringent response', an adaptive process that allows bacteria to respond to amino acid starvation, resulting in the coordinated regulation of numerous cellular activities. The protein is Guanosine-5'-triphosphate,3'-diphosphate pyrophosphatase of Aliivibrio fischeri (strain MJ11) (Vibrio fischeri).